Here is a 159-residue protein sequence, read N- to C-terminus: Small ribosomal subunit protein uS9 (159 aa).

The protein belongs to the universal ribosomal protein uS9 family.

This Rickettsia conorii (strain ATCC VR-613 / Malish 7) protein is Small ribosomal subunit protein uS9.